We begin with the raw amino-acid sequence, 499 residues long: Guanosine-5'-triphosphate,3'-diphosphate pyrophosphatase (499 aa).

Belongs to the GppA/Ppx family. GppA subfamily.

The catalysed reaction is guanosine 3'-diphosphate 5'-triphosphate + H2O = guanosine 3',5'-bis(diphosphate) + phosphate + H(+). It participates in purine metabolism; ppGpp biosynthesis; ppGpp from GTP: step 2/2. Its function is as follows. Catalyzes the conversion of pppGpp to ppGpp. Guanosine pentaphosphate (pppGpp) is a cytoplasmic signaling molecule which together with ppGpp controls the 'stringent response', an adaptive process that allows bacteria to respond to amino acid starvation, resulting in the coordinated regulation of numerous cellular activities. This Klebsiella pneumoniae (strain 342) protein is Guanosine-5'-triphosphate,3'-diphosphate pyrophosphatase.